The primary structure comprises 238 residues: Ribitol-5-phosphate cytidylyltransferase 2 (238 aa).

CTP-binding positions include 7 to 10 and 81 to 87; these read LAGG and GTDRNET.

The protein belongs to the IspD/TarI cytidylyltransferase family. TarI subfamily.

The catalysed reaction is D-ribitol 5-phosphate + CTP + H(+) = CDP-L-ribitol + diphosphate. It participates in cell wall biogenesis; poly(ribitol phosphate) teichoic acid biosynthesis. Functionally, catalyzes the transfer of the cytidylyl group of CTP to D-ribitol 5-phosphate. This Staphylococcus aureus (strain MRSA252) protein is Ribitol-5-phosphate cytidylyltransferase 2.